The sequence spans 176 residues: NAD(P)H-quinone oxidoreductase subunit 6, chloroplastic (176 aa).

The next 5 membrane-spanning stretches (helical) occupy residues 10 to 30 (FLLV…VLLT), 32 to 52 (PIYS…FYIL), 61 to 81 (AQLL…VMFM), 92 to 112 (LWTL…LSLI), and 152 to 172 (FFLP…GAIA).

This sequence belongs to the complex I subunit 6 family. As to quaternary structure, NDH is composed of at least 16 different subunits, 5 of which are encoded in the nucleus.

Its subcellular location is the plastid. It is found in the chloroplast thylakoid membrane. It carries out the reaction a plastoquinone + NADH + (n+1) H(+)(in) = a plastoquinol + NAD(+) + n H(+)(out). The enzyme catalyses a plastoquinone + NADPH + (n+1) H(+)(in) = a plastoquinol + NADP(+) + n H(+)(out). In terms of biological role, NDH shuttles electrons from NAD(P)H:plastoquinone, via FMN and iron-sulfur (Fe-S) centers, to quinones in the photosynthetic chain and possibly in a chloroplast respiratory chain. The immediate electron acceptor for the enzyme in this species is believed to be plastoquinone. Couples the redox reaction to proton translocation, and thus conserves the redox energy in a proton gradient. The sequence is that of NAD(P)H-quinone oxidoreductase subunit 6, chloroplastic (ndhG) from Pelargonium hortorum (Common geranium).